The chain runs to 172 residues: Shikimate kinase (172 aa).

Residue 8–15 (GARASGKT) participates in ATP binding.

The protein belongs to the shikimate kinase family.

It is found in the cytoplasm. It carries out the reaction shikimate + ATP = 3-phosphoshikimate + ADP + H(+). The protein operates within metabolic intermediate biosynthesis; chorismate biosynthesis; chorismate from D-erythrose 4-phosphate and phosphoenolpyruvate: step 5/7. This is Shikimate kinase from Oleidesulfovibrio alaskensis (strain ATCC BAA-1058 / DSM 17464 / G20) (Desulfovibrio alaskensis).